Reading from the N-terminus, the 126-residue chain is Adenosine 5'-monophosphoramidase HINT1 (126 aa).

N-acetylalanine is present on A2. An HIT domain is found at 18–126 (IFGKIIRKEI…GGRQMHWPPG (109 aa)). N6-acetyllysine occurs at positions 21 and 30. Position 43-44 (43-44 (DI)) interacts with AMP. Residues S45 and S72 each carry the phosphoserine modification. Residues N99, 105-107 (GQS), and 112-114 (HLH) each bind AMP. The Histidine triad motif signature appears at 110-114 (HVHLH). H112 serves as the catalytic Tele-AMP-histidine intermediate.

It belongs to the HINT family. Homodimer. Interacts with CDK7. Interacts with RUVBL1 and RUVBL2 and is associated with the LEF1/TCF1-CTNNB1 complex and with a KAT5 histone acetyltransferase complex. Identified in a complex with MITF and CTNNB1. Interacts with CDC34 and RBX1, and is part of a SCF (SKP2-CUL1-F-box protein) E3 ubiquitin-protein ligase complex. Interacts with SUMO1, SUMO2 and RGS17. Interacts with the Ten-1 ICD form of TENM1. Interacts with CALM1; interaction increases in the presence of calcium ions.

Its subcellular location is the cytoplasm. The protein localises to the nucleus. It carries out the reaction adenosine 5'-phosphoramidate + H2O = AMP + NH4(+). Its function is as follows. Exhibits adenosine 5'-monophosphoramidase activity, hydrolyzing purine nucleotide phosphoramidates with a single phosphate group such as adenosine 5'monophosphoramidate (AMP-NH2) to yield AMP and NH2. Hydrolyzes adenosine 5'monophosphomorpholidate (AMP-morpholidate) and guanosine 5'monophosphomorpholidate (GMP-morpholidate). Hydrolyzes lysyl-AMP (AMP-N-epsilon-(N-alpha-acetyl lysine methyl ester)) generated by lysine tRNA ligase, as well as Met-AMP, His-AMP and Asp-AMP, lysyl-GMP (GMP-N-epsilon-(N-alpha-acetyl lysine methyl ester)) and AMP-N-alanine methyl ester. Can also convert adenosine 5'-O-phosphorothioate and guanosine 5'-O-phosphorothioate to the corresponding nucleoside 5'-O-phosphates with concomitant release of hydrogen sulfide. In addition, functions as a scaffolding protein that modulates transcriptional activation by the LEF1/TCF1-CTNNB1 complex and by the complex formed with MITF and CTNNB1. Modulates p53/TP53 levels and p53/TP53-mediated apoptosis. Modulates proteasomal degradation of target proteins by the SCF (SKP2-CUL1-F-box protein) E3 ubiquitin-protein ligase complex. Also exhibits SUMO-specific isopeptidase activity, deconjugating SUMO1 from RANGAP1 and RGS17. The chain is Adenosine 5'-monophosphoramidase HINT1 (HINT1) from Pongo abelii (Sumatran orangutan).